A 950-amino-acid polypeptide reads, in one-letter code: Lon protease homolog, mitochondrial (950 aa).

The transit peptide at M1–G65 directs the protein to the mitochondrion. Disordered stretches follow at residues W67–G94 and P212–K243. The region spanning L112–F360 is the Lon N-terminal domain. The segment covering K224–K233 has biased composition (basic residues). G513 to T520 lines the ATP pocket. A Lon proteolytic domain is found at V749–L939. Catalysis depends on residues S845 and K888.

This sequence belongs to the peptidase S16 family. As to quaternary structure, homohexamer. Organized in a ring with a central cavity. The ATP-binding and proteolytic domains (AP-domain) form a hexameric chamber, while the N-terminal domain is arranged as a trimer of dimers. DNA and RNA binding is stimulated by substrate and inhibited by ATP binding. Interacts with TWNK and mitochondrial DNA polymerase subunit POLG.

The protein localises to the mitochondrion matrix. The enzyme catalyses Hydrolysis of proteins in presence of ATP.. In terms of biological role, ATP-dependent serine protease that mediates the selective degradation of misfolded, unassembled or oxidatively damaged polypeptides as well as certain short-lived regulatory proteins in the mitochondrial matrix. Endogenous substrates include mitochondrial steroidogenic acute regulatory (StAR) protein, DELE1, helicase Twinkle (TWNK) and the large ribosomal subunit protein MRPL32/bL32m. MRPL32/bL32m is protected from degradation by LONP1 when it is bound to a nucleic acid (RNA), but TWNK is not. May also have a chaperone function in the assembly of inner membrane protein complexes. Participates in the regulation of mitochondrial gene expression and in the maintenance of the integrity of the mitochondrial genome. Binds to mitochondrial promoters and RNA in a single-stranded, site-specific, and strand-specific manner. May regulate mitochondrial DNA replication and/or gene expression using site-specific, single-stranded DNA binding to target the degradation of regulatory proteins binding to adjacent sites in mitochondrial promoters. This Rattus norvegicus (Rat) protein is Lon protease homolog, mitochondrial (Lonp1).